Here is a 333-residue protein sequence, read N- to C-terminus: Beta-ketoacyl-[acyl-carrier-protein] synthase III (333 aa).

Residues Cys112 and His255 contribute to the active site. The segment at 256–260 (QANQR) is ACP-binding. Asn285 is a catalytic residue.

The protein belongs to the thiolase-like superfamily. FabH family. Homodimer.

It is found in the cytoplasm. It carries out the reaction malonyl-[ACP] + acetyl-CoA + H(+) = 3-oxobutanoyl-[ACP] + CO2 + CoA. Its pathway is lipid metabolism; fatty acid biosynthesis. Catalyzes the condensation reaction of fatty acid synthesis by the addition to an acyl acceptor of two carbons from malonyl-ACP. Catalyzes the first condensation reaction which initiates fatty acid synthesis and may therefore play a role in governing the total rate of fatty acid production. Possesses both acetoacetyl-ACP synthase and acetyl transacylase activities. Its substrate specificity determines the biosynthesis of branched-chain and/or straight-chain of fatty acids. This is Beta-ketoacyl-[acyl-carrier-protein] synthase III from Synechococcus sp. (strain RCC307).